Reading from the N-terminus, the 153-residue chain is Deoxyuridine 5'-triphosphate nucleotidohydrolase (153 aa).

Substrate contacts are provided by residues 71–73 (RSG), N84, 88–90 (TID), and K98.

This sequence belongs to the dUTPase family. It depends on Mg(2+) as a cofactor.

It catalyses the reaction dUTP + H2O = dUMP + diphosphate + H(+). Its pathway is pyrimidine metabolism; dUMP biosynthesis; dUMP from dCTP (dUTP route): step 2/2. Functionally, this enzyme is involved in nucleotide metabolism: it produces dUMP, the immediate precursor of thymidine nucleotides and it decreases the intracellular concentration of dUTP so that uracil cannot be incorporated into DNA. This Ehrlichia canis (strain Jake) protein is Deoxyuridine 5'-triphosphate nucleotidohydrolase.